Reading from the N-terminus, the 667-residue chain is UvrABC system protein B (667 aa).

The 156-residue stretch at 25–180 folds into the Helicase ATP-binding domain; that stretch reads DSLQNQHRFQ…LLRALVSVQY (156 aa). 38–45 is an ATP binding site; it reads GATGTGKT. Positions 91-114 match the Beta-hairpin motif; that stretch reads YYDYYQPEAYIPVSDTYIEKSSSI. In terms of domain architecture, Helicase C-terminal spans 429–595; it reads QVDDLLGEIK…PIVKRSSNSI (167 aa). The UVR domain maps to 626-661; that stretch reads PELIQQLEAQMKEAAKNLEFESAAKYRDRIKQLRDK.

The protein belongs to the UvrB family. As to quaternary structure, forms a heterotetramer with UvrA during the search for lesions. Interacts with UvrC in an incision complex.

The protein resides in the cytoplasm. Functionally, the UvrABC repair system catalyzes the recognition and processing of DNA lesions. A damage recognition complex composed of 2 UvrA and 2 UvrB subunits scans DNA for abnormalities. Upon binding of the UvrA(2)B(2) complex to a putative damaged site, the DNA wraps around one UvrB monomer. DNA wrap is dependent on ATP binding by UvrB and probably causes local melting of the DNA helix, facilitating insertion of UvrB beta-hairpin between the DNA strands. Then UvrB probes one DNA strand for the presence of a lesion. If a lesion is found the UvrA subunits dissociate and the UvrB-DNA preincision complex is formed. This complex is subsequently bound by UvrC and the second UvrB is released. If no lesion is found, the DNA wraps around the other UvrB subunit that will check the other stand for damage. The protein is UvrABC system protein B of Microcystis aeruginosa (strain NIES-843 / IAM M-2473).